The sequence spans 202 residues: Na(+)-translocating NADH-quinone reductase subunit E (202 aa).

The next 6 membrane-spanning stretches (helical) occupy residues 5–25 (VSLFITSVFIENMALAYFLGM), 35–55 (VSTAIGLGVAVVVVMAITVPL), 81–101 (FLGLLSYIGLIAATVQILEMF), 114–134 (GVFLPLITVNCAILGGVLFMV), 144–164 (VVYGVGAGFGWALAITALAGI), and 180–200 (LGITFITVGLMSLGFMSFGGM).

This sequence belongs to the NqrDE/RnfAE family. Composed of six subunits; NqrA, NqrB, NqrC, NqrD, NqrE and NqrF.

The protein resides in the cell inner membrane. The catalysed reaction is a ubiquinone + n Na(+)(in) + NADH + H(+) = a ubiquinol + n Na(+)(out) + NAD(+). In terms of biological role, NQR complex catalyzes the reduction of ubiquinone-1 to ubiquinol by two successive reactions, coupled with the transport of Na(+) ions from the cytoplasm to the periplasm. NqrA to NqrE are probably involved in the second step, the conversion of ubisemiquinone to ubiquinol. The sequence is that of Na(+)-translocating NADH-quinone reductase subunit E from Psychrobacter arcticus (strain DSM 17307 / VKM B-2377 / 273-4).